The following is a 250-amino-acid chain: UPF0736 protein BLi01230/BL03322 (250 aa).

The protein belongs to the UPF0736 family.

This is UPF0736 protein BLi01230/BL03322 from Bacillus licheniformis (strain ATCC 14580 / DSM 13 / JCM 2505 / CCUG 7422 / NBRC 12200 / NCIMB 9375 / NCTC 10341 / NRRL NRS-1264 / Gibson 46).